Consider the following 795-residue polypeptide: Lon protease 1 (795 aa).

In terms of domain architecture, Lon N-terminal spans 9–204; it reads LPVLPLRNTV…RVLALLLRDL (196 aa). An ATP-binding site is contributed by 360-367; sequence GPPGVGKT. The Lon proteolytic domain maps to 596 to 777; the sequence is EPQVGAAQGL…GEVLKLLLLP (182 aa). Active-site residues include Ser-683 and Lys-726.

It belongs to the peptidase S16 family. As to quaternary structure, homohexamer. Organized in a ring with a central cavity.

Its subcellular location is the cytoplasm. The enzyme catalyses Hydrolysis of proteins in presence of ATP.. Its function is as follows. ATP-dependent serine protease that mediates the selective degradation of mutant and abnormal proteins as well as certain short-lived regulatory proteins. Required for cellular homeostasis and for survival from DNA damage and developmental changes induced by stress. Degrades polypeptides processively to yield small peptide fragments that are 5 to 10 amino acids long. Binds to DNA in a double-stranded, site-specific manner. This Thermus thermophilus (strain ATCC BAA-163 / DSM 7039 / HB27) protein is Lon protease 1.